The chain runs to 148 residues: MCSSAAASPALDDIEEGIALRPKFDAAGLVTCVTTDAGSGDVLMVAHMNAEALEKTIQSGEAWYYSRSRKRLWKKGESSGHVQRVLEMRIDCDQDAVWIRVDQAGGAACHTGRKSCFYRRIDRDASGEPLLTMVDAERQFDPDKVYGK.

Asp91 contacts Mg(2+). Cys92 provides a ligand contact to Zn(2+). Mg(2+) contacts are provided by Asp93 and Asp95. Zn(2+) is bound by residues Cys109 and Cys116.

Belongs to the PRA-CH family. Homodimer. Mg(2+) serves as cofactor. It depends on Zn(2+) as a cofactor.

The protein localises to the cytoplasm. It catalyses the reaction 1-(5-phospho-beta-D-ribosyl)-5'-AMP + H2O = 1-(5-phospho-beta-D-ribosyl)-5-[(5-phospho-beta-D-ribosylamino)methylideneamino]imidazole-4-carboxamide. Its pathway is amino-acid biosynthesis; L-histidine biosynthesis; L-histidine from 5-phospho-alpha-D-ribose 1-diphosphate: step 3/9. Catalyzes the hydrolysis of the adenine ring of phosphoribosyl-AMP. The protein is Phosphoribosyl-AMP cyclohydrolase of Rhodopseudomonas palustris (strain HaA2).